A 453-amino-acid polypeptide reads, in one-letter code: Ribulose bisphosphate carboxylase large chain (453 aa).

A propeptide spanning residues 1 to 2 (MS) is cleaved from the precursor. P3 is subject to N-acetylproline. At K14 the chain carries N6,N6,N6-trimethyllysine. Substrate is bound by residues N123 and T173. The active-site Proton acceptor is the K175. K177 contributes to the substrate binding site. Residues K201, D203, and E204 each coordinate Mg(2+). K201 carries the post-translational modification N6-carboxylysine. The active-site Proton acceptor is the H294. 3 residues coordinate substrate: R295, H327, and S379.

This sequence belongs to the RuBisCO large chain family. Type I subfamily. Heterohexadecamer of 8 large chains and 8 small chains; disulfide-linked. The disulfide link is formed within the large subunit homodimers. Mg(2+) is required as a cofactor. The disulfide bond which can form in the large chain dimeric partners within the hexadecamer appears to be associated with oxidative stress and protein turnover.

The protein resides in the plastid. Its subcellular location is the chloroplast. The enzyme catalyses 2 (2R)-3-phosphoglycerate + 2 H(+) = D-ribulose 1,5-bisphosphate + CO2 + H2O. It carries out the reaction D-ribulose 1,5-bisphosphate + O2 = 2-phosphoglycolate + (2R)-3-phosphoglycerate + 2 H(+). In terms of biological role, ruBisCO catalyzes two reactions: the carboxylation of D-ribulose 1,5-bisphosphate, the primary event in carbon dioxide fixation, as well as the oxidative fragmentation of the pentose substrate in the photorespiration process. Both reactions occur simultaneously and in competition at the same active site. The chain is Ribulose bisphosphate carboxylase large chain from Galium elongatum (Great marsh bedstraw).